The chain runs to 554 residues: Perforin-1 (554 aa).

A signal peptide spans 1–20 (MATCLFLLGLFLLLPRPVPA). 3 disulfides stabilise this stretch: C22–C75, C30–C72, and C101–C175. An MACPF domain is found at 26 to 374 (TRSECKQKHK…HYIMSRARWQ (349 aa)). Residues 128–148 (WRVGLDVNPRPEANMRASVAG) traverse the membrane as a beta stranded segment. The N-linked (GlcNAc...) asparagine glycan is linked to N204. 4 cysteine pairs are disulfide-bonded: C241–C407, C376–C392, C380–C394, and C396–C406. Residues 256–278 (CLNVEAQVSIGAQASVSSEYKAC) form a beta stranded membrane-spanning segment. N375 is a glycosylation site (N-linked (GlcNAc...) asparagine). Residues 375-407 (NCSRPCRSGQHKSSHDSCQCECQDSKVTNQDCC) form the EGF-like domain. One can recognise a C2 domain in the interval 395–513 (ECQDSKVTNQ…FHEVTCELNH (119 aa)). G428, D429, T432, A433, D435, N454, E467, D483, A484, D485, W488, D489, D490, and D491 together coordinate Ca(2+). Disulfide bonds link C496/C509 and C524/C533. N548 carries an N-linked (GlcNAc...) asparagine glycan.

Belongs to the complement C6/C7/C8/C9 family. As to quaternary structure, monomer, as soluble protein. Homooligomer; homooligomerizes to form a pore-forming ring. Requires Ca(2+) as cofactor. N-glycosylated. The glycosylation sites are facing the interior of the pore. In terms of tissue distribution, detected in cytotoxic T-lymphocytes and natural killer cells.

It localises to the cytolytic granule. The protein resides in the secreted. Its subcellular location is the cell membrane. It is found in the endosome lumen. Pore-forming protein that plays a key role in granzyme-mediated programmed cell death, and in defense against virus-infected or neoplastic cells. Can insert into the membrane of target cells in its calcium-bound form, oligomerize and form large pores. Promotes cytolysis and apoptosis of target cells by mediating the passage and uptake of cytotoxic granzymes. Facilitates the delivery of cationic cargo protein, while anionic or neural proteins are not delivered efficiently. Perforin pores allow the release of mature caspase-7 (CASP7) into the extracellular milieu. This chain is Perforin-1 (Prf1), found in Mus musculus (Mouse).